The sequence spans 231 residues: Endonuclease NucS (231 aa).

Belongs to the NucS endonuclease family.

The protein resides in the cytoplasm. Functionally, cleaves both 3' and 5' ssDNA extremities of branched DNA structures. This Arthrobacter sp. (strain FB24) protein is Endonuclease NucS.